The following is a 468-amino-acid chain: UDP-N-acetylmuramoyl-L-alanine--L-glutamate ligase (468 aa).

Gly122–Thr128 contacts ATP.

This sequence belongs to the MurCDEF family. MurD2 subfamily.

The protein resides in the cytoplasm. It carries out the reaction UDP-N-acetyl-alpha-D-muramoyl-L-alanine + L-glutamate + ATP = UDP-N-acetyl-alpha-D-muramoyl-L-alanyl-L-glutamate + ADP + phosphate + H(+). It functions in the pathway cell wall biogenesis; peptidoglycan biosynthesis. Functionally, cell wall formation. Catalyzes the addition of L-glutamate to the nucleotide precursor UDP-N-acetylmuramoyl-L-alanine. The protein is UDP-N-acetylmuramoyl-L-alanine--L-glutamate ligase of Xanthomonas euvesicatoria pv. vesicatoria (strain 85-10) (Xanthomonas campestris pv. vesicatoria).